Reading from the N-terminus, the 248-residue chain is MIAFIEPFLASKSLANNSQQAYRYDLRQFCQQVGQRINPETLALYQQSLSSLTAAAKKRKLSTVNQFLYYLYQQRVLADYFKMDDRIEASFSLKPQLTRLDTSAFYAETAFLKGQLIALLILELGLTPSEIAGLRLADFDLGLQVLRLQSHRGIRVMTLSRTLLPFLERAAEAQQLYLFDHDAKPFSRQWFFNQLRDFLESIGCAELSAQSLREQFILNEKAAGKSIIEVAQLLGLKSPITLEKYYKM.

The 72-residue stretch at 1 to 72 folds into the Core-binding (CB) domain; sequence MIAFIEPFLA…TVNQFLYYLY (72 aa). The 157-residue stretch at 92-248 folds into the Tyr recombinase domain; the sequence is SLKPQLTRLD…PITLEKYYKM (157 aa). Arg213 is an active-site residue. The active-site O-(3'-phospho-DNA)-tyrosine intermediate is Tyr245.

This sequence belongs to the 'phage' integrase family. XerD-like subfamily.

Its subcellular location is the cytoplasm. Putative tyrosine recombinase. Not involved in the cutting and rejoining of the recombining DNA molecules on dif(SL) site. In Streptococcus equi subsp. zooepidemicus (strain H70), this protein is Tyrosine recombinase XerD-like.